We begin with the raw amino-acid sequence, 160 residues long: N-acetyltransferase Pat (160 aa).

The region spanning I5–R148 is the N-acetyltransferase domain. The CoA site is built by L79, V81, T87, G89, G91, T92, N118, K123, and K127.

The protein belongs to the acetyltransferase family. GNAT subfamily.

The enzyme catalyses L-lysyl-[protein] + acetyl-CoA = N(6)-acetyl-L-lysyl-[protein] + CoA + H(+). In terms of biological role, modulates activity of albA1, the major archaeal DNA compaction protein, by decreasing albA1's nucleic acid binding affinity through acetylation of 'Lys-16'. The chain is N-acetyltransferase Pat from Saccharolobus solfataricus (strain ATCC 35092 / DSM 1617 / JCM 11322 / P2) (Sulfolobus solfataricus).